A 367-amino-acid chain; its full sequence is Riboflavin biosynthesis protein RibD (367 aa).

One can recognise a CMP/dCMP-type deaminase domain in the interval 1–123 (MQDEYYMARA…RLQQAGIDVS (123 aa)). The interval 1 to 145 (MQDEYYMARA…KGFLKRMRTG (145 aa)) is deaminase. H50 is a binding site for Zn(2+). The active-site Proton donor is E52. C75 and C84 together coordinate Zn(2+). Residues 146–367 (FPYIQLKLGA…PDVCLHLVGA (222 aa)) form a reductase region. 161–164 (TAMA) is an NADP(+) binding site. S168 is a binding site for substrate. W170 is a binding site for NADP(+). R184 provides a ligand contact to substrate. The NADP(+) site is built by T196 and D200. Residues L204 and R207 each contribute to the substrate site. S234 contributes to the NADP(+) binding site. E299 serves as a coordination point for substrate. 301 to 304 (GPTL) serves as a coordination point for NADP(+).

It in the N-terminal section; belongs to the cytidine and deoxycytidylate deaminase family. The protein in the C-terminal section; belongs to the HTP reductase family. In terms of assembly, homodimer. Requires Zn(2+) as cofactor.

The enzyme catalyses 2,5-diamino-6-hydroxy-4-(5-phosphoribosylamino)-pyrimidine + H2O + H(+) = 5-amino-6-(5-phospho-D-ribosylamino)uracil + NH4(+). It catalyses the reaction 5-amino-6-(5-phospho-D-ribitylamino)uracil + NADP(+) = 5-amino-6-(5-phospho-D-ribosylamino)uracil + NADPH + H(+). It functions in the pathway cofactor biosynthesis; riboflavin biosynthesis; 5-amino-6-(D-ribitylamino)uracil from GTP: step 2/4. Its pathway is cofactor biosynthesis; riboflavin biosynthesis; 5-amino-6-(D-ribitylamino)uracil from GTP: step 3/4. Its function is as follows. Converts 2,5-diamino-6-(ribosylamino)-4(3h)-pyrimidinone 5'-phosphate into 5-amino-6-(ribosylamino)-2,4(1h,3h)-pyrimidinedione 5'-phosphate. This chain is Riboflavin biosynthesis protein RibD (ribD), found in Escherichia coli (strain K12).